A 254-amino-acid chain; its full sequence is Phosphomannomutase (254 aa).

Catalysis depends on aspartate 19, which acts as the Nucleophile. 2 residues coordinate Mg(2+): aspartate 19 and aspartate 21. Catalysis depends on aspartate 21, which acts as the Proton donor/acceptor. Residues arginine 28, arginine 130, arginine 141, arginine 148, serine 186, and aspartate 188 each coordinate alpha-D-mannose 1-phosphate. The Mg(2+) site is built by aspartate 216, phenylalanine 228, aspartate 230, and threonine 233. Serine 240 is modified (phosphoserine).

It belongs to the eukaryotic PMM family. Homodimer.

It is found in the cytoplasm. The enzyme catalyses alpha-D-mannose 1-phosphate = D-mannose 6-phosphate. It participates in nucleotide-sugar biosynthesis; GDP-alpha-D-mannose biosynthesis; alpha-D-mannose 1-phosphate from D-fructose 6-phosphate: step 2/2. Functionally, involved in the synthesis of the GDP-mannose and dolichol-phosphate-mannose required for a number of critical mannosyl transfer reactions such as folding and glycosylation of secretory proteins in the ER lumen. This is Phosphomannomutase from Saccharomyces cerevisiae (strain ATCC 204508 / S288c) (Baker's yeast).